A 276-amino-acid chain; its full sequence is Release factor glutamine methyltransferase (276 aa).

Residues G117–G121, D140, W168, and N182 each bind S-adenosyl-L-methionine. N182–Y185 contributes to the substrate binding site.

It belongs to the protein N5-glutamine methyltransferase family. PrmC subfamily.

The enzyme catalyses L-glutaminyl-[peptide chain release factor] + S-adenosyl-L-methionine = N(5)-methyl-L-glutaminyl-[peptide chain release factor] + S-adenosyl-L-homocysteine + H(+). Its function is as follows. Methylates the class 1 translation termination release factors RF1/PrfA and RF2/PrfB on the glutamine residue of the universally conserved GGQ motif. This Yersinia pestis protein is Release factor glutamine methyltransferase.